The sequence spans 426 residues: Enolase (426 aa).

(2R)-2-phosphoglycerate is bound at residue glutamine 163. The Proton donor role is filled by glutamate 205. Mg(2+)-binding residues include aspartate 242, glutamate 286, and aspartate 313. (2R)-2-phosphoglycerate-binding residues include lysine 338, arginine 367, serine 368, and lysine 389. Lysine 338 (proton acceptor) is an active-site residue.

Belongs to the enolase family. Mg(2+) serves as cofactor.

The protein localises to the cytoplasm. Its subcellular location is the secreted. The protein resides in the cell surface. It catalyses the reaction (2R)-2-phosphoglycerate = phosphoenolpyruvate + H2O. It participates in carbohydrate degradation; glycolysis; pyruvate from D-glyceraldehyde 3-phosphate: step 4/5. In terms of biological role, catalyzes the reversible conversion of 2-phosphoglycerate (2-PG) into phosphoenolpyruvate (PEP). It is essential for the degradation of carbohydrates via glycolysis. The chain is Enolase from Gemmatimonas aurantiaca (strain DSM 14586 / JCM 11422 / NBRC 100505 / T-27).